The sequence spans 138 residues: Gastrula zinc finger protein XlCGF44.2 (138 aa).

C2H2-type zinc fingers lie at residues 5–27 (FACT…KRIH), 32–54 (FVCA…QRLH), 60–82 (FTCT…QQIH), 88–110 (YVCS…MKTH), and 116–138 (FACS…QESH).

The protein belongs to the krueppel C2H2-type zinc-finger protein family.

Its subcellular location is the nucleus. Functionally, may be involved in transcriptional regulation. The protein is Gastrula zinc finger protein XlCGF44.2 of Xenopus laevis (African clawed frog).